The chain runs to 212 residues: Phosphoribosylformylglycinamidine synthase subunit PurQ (212 aa).

One can recognise a Glutamine amidotransferase type-1 domain in the interval 2–212 (RIAVLKFPGT…WLGLISWLRR (211 aa)). Catalysis depends on Cys-85, which acts as the Nucleophile. Catalysis depends on residues His-183, Glu-185, and His-191.

In terms of assembly, part of the FGAM synthase complex composed of 1 PurL, 1 PurQ and 2 PurS subunits.

It is found in the cytoplasm. It catalyses the reaction N(2)-formyl-N(1)-(5-phospho-beta-D-ribosyl)glycinamide + L-glutamine + ATP + H2O = 2-formamido-N(1)-(5-O-phospho-beta-D-ribosyl)acetamidine + L-glutamate + ADP + phosphate + H(+). The enzyme catalyses L-glutamine + H2O = L-glutamate + NH4(+). The protein operates within purine metabolism; IMP biosynthesis via de novo pathway; 5-amino-1-(5-phospho-D-ribosyl)imidazole from N(2)-formyl-N(1)-(5-phospho-D-ribosyl)glycinamide: step 1/2. Its function is as follows. Part of the phosphoribosylformylglycinamidine synthase complex involved in the purines biosynthetic pathway. Catalyzes the ATP-dependent conversion of formylglycinamide ribonucleotide (FGAR) and glutamine to yield formylglycinamidine ribonucleotide (FGAM) and glutamate. The FGAM synthase complex is composed of three subunits. PurQ produces an ammonia molecule by converting glutamine to glutamate. PurL transfers the ammonia molecule to FGAR to form FGAM in an ATP-dependent manner. PurS interacts with PurQ and PurL and is thought to assist in the transfer of the ammonia molecule from PurQ to PurL. This Pyrobaculum aerophilum (strain ATCC 51768 / DSM 7523 / JCM 9630 / CIP 104966 / NBRC 100827 / IM2) protein is Phosphoribosylformylglycinamidine synthase subunit PurQ.